The sequence spans 239 residues: tRNA (guanine-N(7)-)-methyltransferase (239 aa).

S-adenosyl-L-methionine is bound by residues glutamate 69, glutamate 94, aspartate 121, and aspartate 144. Aspartate 144 is an active-site residue. Lysine 148 lines the substrate pocket. Residues 150–155 (RHNKRR) are interaction with RNA. Substrate-binding positions include aspartate 180 and 217-220 (TKFE).

This sequence belongs to the class I-like SAM-binding methyltransferase superfamily. TrmB family. In terms of assembly, monomer.

It catalyses the reaction guanosine(46) in tRNA + S-adenosyl-L-methionine = N(7)-methylguanosine(46) in tRNA + S-adenosyl-L-homocysteine. It participates in tRNA modification; N(7)-methylguanine-tRNA biosynthesis. Functionally, catalyzes the formation of N(7)-methylguanine at position 46 (m7G46) in tRNA. This is tRNA (guanine-N(7)-)-methyltransferase from Shigella flexneri serotype 5b (strain 8401).